The chain runs to 384 residues: Aurora kinase (384 aa).

Polar residues-rich tracts occupy residues methionine 1–asparagine 12 and serine 19–leucine 29. A disordered region spans residues methionine 1 to valine 100. The segment covering glutamine 30–serine 99 has biased composition (low complexity). Positions phenylalanine 110–isoleucine 360 constitute a Protein kinase domain. Residues leucine 116 to valine 124 and lysine 139 contribute to the ATP site. Aspartate 233 serves as the catalytic Proton acceptor.

This sequence belongs to the protein kinase superfamily. Ser/Thr protein kinase family. Aurora subfamily. Interacts with icpA. Forms a complex at the central spindle.

It localises to the cytoplasm. It is found in the chromosome. The protein resides in the centromere. Its subcellular location is the cytoskeleton. The protein localises to the spindle pole. It localises to the cleavage furrow. It is found in the cell projection. The protein resides in the neuron projection. The catalysed reaction is L-seryl-[protein] + ATP = O-phospho-L-seryl-[protein] + ADP + H(+). The enzyme catalyses L-threonyl-[protein] + ATP = O-phospho-L-threonyl-[protein] + ADP + H(+). In terms of biological role, part of a chromosomal passenger complex. The chain is Aurora kinase (aurK) from Dictyostelium discoideum (Social amoeba).